The following is a 499-amino-acid chain: Beta-amylase (499 aa).

Asp-55, His-95, and Asp-103 together coordinate substrate. Glu-188 functions as the Proton donor in the catalytic mechanism. Residues Lys-298, His-303, and Thr-345 each contribute to the substrate site. The active-site Proton acceptor is Glu-383. Substrate-binding positions include 384 to 385 (NA) and Arg-423.

Belongs to the glycosyl hydrolase 14 family. As to quaternary structure, homotetramer.

It catalyses the reaction Hydrolysis of (1-&gt;4)-alpha-D-glucosidic linkages in polysaccharides so as to remove successive maltose units from the non-reducing ends of the chains.. The protein is Beta-amylase (BMY1) of Ipomoea batatas (Sweet potato).